We begin with the raw amino-acid sequence, 217 residues long: Small ribosomal subunit protein uS3 (217 aa).

Positions 38-106 constitute a KH type-2 domain; it reads IRKFIDNELK…KVHINVIEIK (69 aa).

This sequence belongs to the universal ribosomal protein uS3 family. In terms of assembly, part of the 30S ribosomal subunit. Forms a tight complex with proteins S10 and S14.

Binds the lower part of the 30S subunit head. Binds mRNA in the 70S ribosome, positioning it for translation. This Staphylococcus aureus (strain COL) protein is Small ribosomal subunit protein uS3 (rpsC).